The chain runs to 1019 residues: Limulus clotting factor C (1019 aa).

An N-terminal signal peptide occupies residues 1 to 25; sequence MVLASFLVSGLVLGLLAQKMRPVQS. One can recognise an EGF-like domain in the interval 102-137; the sequence is YGTWCSGECQCKNGGICDQRTGACACRDRYEGVHCE. Disulfide bonds link C106-C118, C112-C125, C127-C136, C142-C182, C168-C195, C199-C241, C227-C254, C260-C308, C294-C321, C331-C350, C354-C374, C436-C447, C464-C564, C538-C556, C576-C621, C607-C634, and C720-C748. 3 consecutive Sushi domains span residues 140–197, 198–256, and 258–323; these read KGCP…KCIR, ECAM…QCKN, and VFCP…SCVK. One can recognise an LCCL domain in the interval 325–421; it reads ADREVDCDSK…EELKSLARSF (97 aa). Residues 436–568 form the C-type lectin domain; that stretch reads CPDGWFEVDE…PSSFACMMDL (133 aa). N523 and N534 each carry an N-linked (GlcNAc...) asparagine glycan. Sushi domains follow at residues 574 to 636 and 689 to 750; these read AKCD…RCIK and PRSS…SCIP. 3 N-linked (GlcNAc...) asparagine glycosylation sites follow: N624, N740, and N767. Positions 763 to 1019 constitute a Peptidase S1 domain; it reads IWNGNSTEIG…VFLSWIRQFI (257 aa). C794 and C810 are disulfide-bonded. Residues H809 and D865 each act as charge relay system in the active site. N912 is a glycosylation site (N-linked (GlcNAc...) asparagine). The cysteines at positions 932 and 951 are disulfide-linked. D960 is a substrate binding site. A disulfide bridge connects residues C962 and C996. The Charge relay system role is filled by S966.

This sequence belongs to the peptidase S1 family. In terms of assembly, heterodimer of a light chain and a heavy chain linked by a disulfide bond.

It is found in the secreted. The enzyme catalyses Selective cleavage of 103-Arg-|-Ser-104 and 124-Ile-|-Ile-125 bonds in Limulus clotting factor B to form activated factor B. Cleavage of -Pro-Arg-|-Xaa- bonds in synthetic substrates.. Activated by Gram-negative bacterial lipopolysaccharides and chymotrypsin. Functionally, this enzyme is closely associated with an endotoxin-sensitive hemolymph coagulation system which may play important roles in both hemostasis and host defense mechanisms. Its active form catalyzes the activation of factor B. This chain is Limulus clotting factor C, found in Carcinoscorpius rotundicauda (Mangrove horseshoe crab).